The following is a 269-amino-acid chain: Cytochrome c oxidase subunit 3 (269 aa).

Helical transmembrane passes span 7–29 (GYLQ…TSFS), 51–71 (IILS…DIIA), 90–110 (GFLL…WAYL), 127–147 (VGID…ILLA), 167–187 (TLYG…FQFL), 205–225 (FYSL…MLVI), and 247–267 (ILYL…VYWW).

Belongs to the cytochrome c oxidase subunit 3 family. In terms of assembly, component of the cytochrome c oxidase (complex IV, CIV), a multisubunit enzyme composed of a catalytic core of 3 subunits and several supernumerary subunits. The complex exists as a monomer or a dimer and forms supercomplexes (SCs) in the inner mitochondrial membrane with ubiquinol-cytochrome c oxidoreductase (cytochrome b-c1 complex, complex III, CIII).

The protein resides in the mitochondrion inner membrane. It carries out the reaction 4 Fe(II)-[cytochrome c] + O2 + 8 H(+)(in) = 4 Fe(III)-[cytochrome c] + 2 H2O + 4 H(+)(out). In terms of biological role, component of the cytochrome c oxidase, the last enzyme in the mitochondrial electron transport chain which drives oxidative phosphorylation. The respiratory chain contains 3 multisubunit complexes succinate dehydrogenase (complex II, CII), ubiquinol-cytochrome c oxidoreductase (cytochrome b-c1 complex, complex III, CIII) and cytochrome c oxidase (complex IV, CIV), that cooperate to transfer electrons derived from NADH and succinate to molecular oxygen, creating an electrochemical gradient over the inner membrane that drives transmembrane transport and the ATP synthase. Cytochrome c oxidase is the component of the respiratory chain that catalyzes the reduction of oxygen to water. Electrons originating from reduced cytochrome c in the intermembrane space (IMS) are transferred via the dinuclear copper A center (CU(A)) of subunit 2 and heme A of subunit 1 to the active site in subunit 1, a binuclear center (BNC) formed by heme A3 and copper B (CU(B)). The BNC reduces molecular oxygen to 2 water molecules using 4 electrons from cytochrome c in the IMS and 4 protons from the mitochondrial matrix. The sequence is that of Cytochrome c oxidase subunit 3 (COX3) from Candida parapsilosis (Yeast).